We begin with the raw amino-acid sequence, 456 residues long: DnaJ homolog dnj-10 (456 aa).

Residues 44–108 form the J domain; it reads DYYKTLGVDK…TKRQEYDAYG (65 aa). The segment at 178–257 adopts a CR-type zinc-finger fold; sequence GATKNVSVNV…CEGEGQTVQR (80 aa). CXXCXGXG motif repeat units follow at residues 208–215, 231–238, and 245–252; these read CPYCNGTG, CNRCRGSG, and CQECEGEG. Residues 395 to 429 show a composition bias toward basic and acidic residues; that stretch reads KGLEKNQKTEEKETKKNEEKKSEGASESQKRRSEP. The segment at 395-443 is disordered; the sequence is KGLEKNQKTEEKETKKNEEKKSEGASESQKRRSEPVAENAETIDENQEN.

The polypeptide is DnaJ homolog dnj-10 (dnj-10) (Caenorhabditis elegans).